The chain runs to 289 residues: Rhomboid-type serine protease 2 (289 aa).

Helical transmembrane passes span 26-46 (VVII…VDIQ), 67-87 (FPFI…LTPL), 100-120 (CLAL…IGLE), 122-142 (FVFG…LLLG), 157-179 (IGTY…AVLV), and 184-203 (FWGH…SSTL). The Nucleophile role is filled by serine 134. Residue histidine 187 is part of the active site.

The protein belongs to the peptidase S54 family.

It is found in the golgi apparatus membrane. It localises to the golgi apparatus. The protein localises to the cis-Golgi network membrane. It catalyses the reaction Cleaves type-1 transmembrane domains using a catalytic dyad composed of serine and histidine that are contributed by different transmembrane domains.. Probable rhomboid-type serine protease that catalyzes intramembrane proteolysis. This chain is Rhomboid-type serine protease 2 (RBD2), found in Podospora anserina (Pleurage anserina).